A 323-amino-acid polypeptide reads, in one-letter code: Beta-ketoacyl-[acyl-carrier-protein] synthase III (323 aa).

Catalysis depends on residues cysteine 112 and histidine 250. The ACP-binding stretch occupies residues 251–255 (QANQR). The active site involves asparagine 280.

It belongs to the thiolase-like superfamily. FabH family. In terms of assembly, homodimer.

The protein resides in the cytoplasm. It carries out the reaction malonyl-[ACP] + acetyl-CoA + H(+) = 3-oxobutanoyl-[ACP] + CO2 + CoA. Its pathway is lipid metabolism; fatty acid biosynthesis. In terms of biological role, catalyzes the condensation reaction of fatty acid synthesis by the addition to an acyl acceptor of two carbons from malonyl-ACP. Catalyzes the first condensation reaction which initiates fatty acid synthesis and may therefore play a role in governing the total rate of fatty acid production. Possesses both acetoacetyl-ACP synthase and acetyl transacylase activities. Its substrate specificity determines the biosynthesis of branched-chain and/or straight-chain of fatty acids. The chain is Beta-ketoacyl-[acyl-carrier-protein] synthase III from Oenococcus oeni (strain ATCC BAA-331 / PSU-1).